The primary structure comprises 196 residues: DNA polymerase epsilon subunit D (196 aa).

Residues 125 to 196 (RKKEKLDSGE…ETRVQNLEQT (72 aa)) are disordered. A compositionally biased stretch (acidic residues) spans 133 to 143 (GEVDADGDIDM). Positions 144–159 (GEDKENVPVEKVKEHD) are enriched in basic and acidic residues. Over residues 160–173 (EIEEQGDALQDVEE) the composition is skewed to acidic residues. Over residues 174–188 (SSEKKQKTESQDVET) the composition is skewed to basic and acidic residues. A Phosphoserine; by ATM or ATR modification is found at Ser-183.

DNA polymerase epsilon is a heterotetramer consisting of POL2, DPB2, DPB3 and DPB4. Component of the ISW2 complex, which at least consists of ISW2, ITC1, DLS1 and DPB4.

It is found in the nucleus. In terms of biological role, as accessory component of the DNA polymerase epsilon (DNA polymerase II) participates in chromosomal DNA replication. It is required during synthesis of the leading and lagging DNA strands at the replication fork and binds at/or near replication origins and moves along DNA with the replication fork. It has 3'-5' proofreading exonuclease activity that correct errors arising during DNA replication. It is also involved in DNA synthesis during DNA repair. Also functions as a component of the ISW2 complex, which acts in remodeling the chromatin by catalyzing an ATP-dependent alteration in the structure of nucleosomal DNA. The ISW2 complex is involved in coordinating transcriptional repression and in inheritance of telomeric silencing. It is involved in repression of MAT a-specific genes, INO1, and early meiotic genes during mitotic growth dependent upon transcription factor UME6 and in a parallel pathway to the RPD3-SIN3 histone deacetylase complex. The polypeptide is DNA polymerase epsilon subunit D (DPB4) (Saccharomyces cerevisiae (strain ATCC 204508 / S288c) (Baker's yeast)).